Reading from the N-terminus, the 1013-residue chain is Poly [ADP-ribose] polymerase 1 (1013 aa).

PARP-type zinc fingers lie at residues 10-92 and 113-203; these read YKAE…ESGG and FAVE…PAVK. Zn(2+) contacts are provided by Cys-22, Cys-25, His-54, Cys-57, Cys-125, Cys-128, His-159, and Cys-162. Residues 202–228 are disordered; it reads VKSEGKRKADEVDGGVSKKQKKEDEKL. Residues 207 to 209 carry the Nuclear localization signal motif; the sequence is KRK. The 135-residue stretch at 219-353 folds into the PADR1 zinc-binding domain; sequence KKQKKEDEKL…FKRQDRVFPK (135 aa). The segment at 284–326 is zinc ribbon; the sequence is GSLKPCETCKGQLVFKSDAYYCTGDISAWTKCVFKTQTPDRKD. Positions 289, 292, 305, and 315 each coordinate Zn(2+). The disordered stretch occupies residues 353 to 385; that stretch reads KDAPPAAATPSSGSTTSAATSVSSASKNLTEAP. The segment covering 356–378 has biased composition (low complexity); it reads PPAAATPSSGSTTSAATSVSSAS. The interval 365 to 523 is automodification domain; sequence GSTTSAATSV…EGGSKSKKMK (159 aa). In terms of domain architecture, BRCT spans 385–461; the sequence is PADKPLTGMK…RVVADDFLTD (77 aa). A polyADP-ribosyl glutamic acid mark is found at Glu-413, Glu-435, Glu-444, Glu-445, Glu-464, Glu-471, Glu-484, and Glu-488. A compositionally biased stretch (low complexity) spans 494-507; it reads AATKSTGAHSSKST. The segment at 494 to 522 is disordered; it reads AATKSTGAHSSKSTGKVKEEEGGSKSKKM. 2 positions are modified to polyADP-ribosyl glutamic acid: Glu-512 and Glu-513. A WGR domain is found at 541–637; that stretch reads CAHVLEQNGK…SNFTKYPNKF (97 aa). In terms of domain architecture, PARP alpha-helical spans 661-778; that stretch reads KSQLEKPVQD…DIEVAYSLLR (118 aa). The PARP catalytic domain occupies 787-1013; that stretch reads DPIDINYEKL…IRFNYQTSLW (227 aa). Residues 861-863, Gly-870, Arg-877, and Ser-903 each bind NAD(+); that span reads HGS. Glu-987 serves as the catalytic For poly [ADP-ribose] polymerase activity.

This sequence belongs to the ARTD/PARP family. Homodimer; PARP-type zinc-fingers from separate parp1 molecules form a dimer module that specifically recognizes DNA strand breaks. In terms of processing, poly-ADP-ribosylated on serine, glutamate and aspartate residues by autocatalysis. Auto-ADP-ribosylation on serine takes place following interaction with HPF1. Auto poly-ADP-ribosylation on serine residues promotes its dissociation from chromatin.

The protein localises to the chromosome. Its subcellular location is the nucleus. The protein resides in the nucleolus. It localises to the cytoplasm. It is found in the cytosol. It carries out the reaction NAD(+) + (ADP-D-ribosyl)n-acceptor = nicotinamide + (ADP-D-ribosyl)n+1-acceptor + H(+).. The enzyme catalyses L-seryl-[protein] + NAD(+) = O-(ADP-D-ribosyl)-L-seryl-[protein] + nicotinamide + H(+). The catalysed reaction is L-aspartyl-[protein] + NAD(+) = 4-O-(ADP-D-ribosyl)-L-aspartyl-[protein] + nicotinamide. It catalyses the reaction L-glutamyl-[protein] + NAD(+) = 5-O-(ADP-D-ribosyl)-L-glutamyl-[protein] + nicotinamide. It carries out the reaction L-tyrosyl-[protein] + NAD(+) = O-(ADP-D-ribosyl)-L-tyrosyl-[protein] + nicotinamide + H(+). The enzyme catalyses L-histidyl-[protein] + NAD(+) = N(tele)-(ADP-D-ribosyl)-L-histidyl-[protein] + nicotinamide + H(+). Its activity is regulated as follows. ADP-ribosyltransferase activity is regulated via an allosteric activation mechanism. In absence of activation signal, parp1 is autoinhibited by the PARP alpha-helical domain (also named HD region), which prevents effective NAD(+)-binding. Activity is highly stimulated by signals, such as DNA strand breaks. Binding to damaged DNA unfolds the PARP alpha-helical domain, relieving autoinhibition. Poly-ADP-ribosyltransferase activity is tightly regulated and parp1 is removed from damaged chromatin following initial poly-ADP-ribosylation of chromatin to avoid prolonged residence (trapping) that has cytotoxic consequences. A number of factors or post-translational modifications (auto-poly-ADP-ribosylation) promote parp1 removal from chromatin. In terms of biological role, poly-ADP-ribosyltransferase that mediates poly-ADP-ribosylation of proteins and plays a key role in DNA repair. Mediates glutamate, aspartate, serine, histidine or tyrosine ADP-ribosylation of proteins: the ADP-D-ribosyl group of NAD(+) is transferred to the acceptor carboxyl group of target residues and further ADP-ribosyl groups are transferred to the 2'-position of the terminal adenosine moiety, building up a polymer with an average chain length of 20-30 units. Serine ADP-ribosylation of proteins constitutes the primary form of ADP-ribosylation of proteins in response to DNA damage. Specificity for the different amino acids is conferred by interacting factors, such as hpf1 and nmnat1. Following interaction with hpf1, catalyzes serine ADP-ribosylation of target proteins; hpf1 confers serine specificity by completing the parp1 active site. Also catalyzes tyrosine ADP-ribosylation of target proteins following interaction with hpf1. Following interaction with nmnat1, catalyzes glutamate and aspartate ADP-ribosylation of target proteins; nmnat1 confers glutamate and aspartate specificity. Parp1 initiates the repair of DNA breaks: recognizes and binds DNA breaks within chromatin and recruits hpf1, licensing serine ADP-ribosylation of target proteins, such as histones (H2BS6ADPr and H3S10ADPr), thereby promoting decompaction of chromatin and the recruitment of repair factors leading to the reparation of DNA strand breaks. In addition to base excision repair (BER) pathway, also involved in double-strand breaks (DSBs) repair. Mediates the poly-ADP-ribosylation of a number of proteins. In addition to proteins, also able to ADP-ribosylate DNA: catalyzes ADP-ribosylation of DNA strand break termini containing terminal phosphates and a 2'-OH group in single- and double-stranded DNA, respectively. Parp1-mediated DNA repair in neurons plays a role in sleep: senses DNA damage in neurons and promotes sleep, facilitating efficient DNA repair. In addition to DNA repair, also involved in other processes, such as transcription regulation, programmed cell death, membrane repair, adipogenesis and innate immunity. Acts as a repressor of transcription: binds to nucleosomes and modulates chromatin structure in a manner similar to histone H1, thereby altering RNA polymerase II. Acts both as a positive and negative regulator of transcription elongation, depending on the context. Poly-ADP-ribose chains generated by parp1 also play a role in poly-ADP-ribose-dependent cell death, a process named parthanatos. Also acts as a negative regulator of the cGAS-STING pathway by mediating poly-ADP-ribosylation and inactivation of cgas. Acts as a negative regulator of adipogenesis by catalyzing poly ADP-ribosylation of histone H2B on 'Glu-35' (H2BE35ADPr). The polypeptide is Poly [ADP-ribose] polymerase 1 (Danio rerio (Zebrafish)).